The chain runs to 216 residues: 3-isopropylmalate dehydratase small subunit (216 aa).

The protein belongs to the LeuD family. LeuD type 1 subfamily. In terms of assembly, heterodimer of LeuC and LeuD.

It catalyses the reaction (2R,3S)-3-isopropylmalate = (2S)-2-isopropylmalate. It participates in amino-acid biosynthesis; L-leucine biosynthesis; L-leucine from 3-methyl-2-oxobutanoate: step 2/4. Its function is as follows. Catalyzes the isomerization between 2-isopropylmalate and 3-isopropylmalate, via the formation of 2-isopropylmaleate. The protein is 3-isopropylmalate dehydratase small subunit of Polaromonas naphthalenivorans (strain CJ2).